The sequence spans 144 residues: D-aminoacyl-tRNA deacylase (144 aa).

Residues 136–137 (GP) carry the Gly-cisPro motif, important for rejection of L-amino acids motif.

It belongs to the DTD family. Homodimer.

It localises to the cytoplasm. The catalysed reaction is glycyl-tRNA(Ala) + H2O = tRNA(Ala) + glycine + H(+). The enzyme catalyses a D-aminoacyl-tRNA + H2O = a tRNA + a D-alpha-amino acid + H(+). Functionally, an aminoacyl-tRNA editing enzyme that deacylates mischarged D-aminoacyl-tRNAs. Also deacylates mischarged glycyl-tRNA(Ala), protecting cells against glycine mischarging by AlaRS. Acts via tRNA-based rather than protein-based catalysis; rejects L-amino acids rather than detecting D-amino acids in the active site. By recycling D-aminoacyl-tRNA to D-amino acids and free tRNA molecules, this enzyme counteracts the toxicity associated with the formation of D-aminoacyl-tRNA entities in vivo and helps enforce protein L-homochirality. The sequence is that of D-aminoacyl-tRNA deacylase from Corynebacterium efficiens (strain DSM 44549 / YS-314 / AJ 12310 / JCM 11189 / NBRC 100395).